Reading from the N-terminus, the 631-residue chain is RING finger protein 112 (631 aa).

The segment at 57-98 (CSICLERLREPISLDCGHDFCIRCFSTHRIPGCELPCCPECR) adopts an RING-type zinc-finger fold. The segment at 131–631 (AVRAERLLLV…GDREPLLQEE (501 aa)) is interaction with ZBTB16. A GB1/RHD3-type G domain is found at 166–397 (DTPVCLLAVL…YISDVLSTAP (232 aa)). 317–318 (RD) lines the GTP pocket. 2 helical membrane passes run 547–567 (LAAV…GVVG) and 580–600 (GMVA…GGGV).

It belongs to the TRAFAC class dynamin-like GTPase superfamily. GB1/RHD3 GTPase family. GB1 subfamily. Self-associates. Interacts with SP1 in an oxidative stress-regulated manner. Interacts with SIGMAR1 in an oxidative stress-regulated manner. Interacts with ZBTB16 (via C2H2-type zinc finger domains 1 and 2). Auto-ubiquitinated. Predominantly expressed in brain.

The protein localises to the membrane. It localises to the cytoplasm. Its subcellular location is the nucleus. The protein resides in the nuclear body. It is found in the nucleoplasm. The protein localises to the endosome. It localises to the cytoplasmic vesicle. Its subcellular location is the secretory vesicle. The protein resides in the synaptic vesicle. It is found in the postsynaptic density. The protein localises to the perikaryon. It localises to the cell projection. Its subcellular location is the neuron projection. The enzyme catalyses S-ubiquitinyl-[E2 ubiquitin-conjugating enzyme]-L-cysteine + [acceptor protein]-L-lysine = [E2 ubiquitin-conjugating enzyme]-L-cysteine + N(6)-ubiquitinyl-[acceptor protein]-L-lysine.. It participates in protein modification; protein ubiquitination. E3 ubiquitin-protein ligase that plays an important role in neuronal differentiation, including neurogenesis and gliogenesis, during brain development. During embryonic development initiates neuronal differentiation by inducing cell cycle arrest at the G0/G1 phase through up-regulation of cell-cycle regulatory proteins. Plays a role not only in the fetal period during the development of the nervous system, but also in the adult brain, where it is involved in the maintenance of neural functions and protection of the nervous tissue cells from oxidative stress-induced damage. Exhibits GTPase and E3 ubiquitin-protein ligase activities. Regulates dendritic spine density and synaptic neurotransmission; its ability to hydrolyze GTP is involved in the maintenance of dendritic spine density. The chain is RING finger protein 112 (Rnf112) from Rattus norvegicus (Rat).